Consider the following 216-residue polypeptide: Thymidine kinase (216 aa).

ATP contacts are provided by residues 9-16 and 86-89; these read GTMDCGKS and DEAQ. E87 acts as the Proton acceptor in catalysis.

Belongs to the thymidine kinase family. As to quaternary structure, homotetramer.

Its subcellular location is the cytoplasm. It carries out the reaction thymidine + ATP = dTMP + ADP + H(+). The protein is Thymidine kinase of Streptomyces avermitilis (strain ATCC 31267 / DSM 46492 / JCM 5070 / NBRC 14893 / NCIMB 12804 / NRRL 8165 / MA-4680).